The primary structure comprises 306 residues: UDP-3-O-acyl-N-acetylglucosamine deacetylase (306 aa).

Zn(2+) contacts are provided by H81, H241, and D245. H268 (proton donor) is an active-site residue.

This sequence belongs to the LpxC family. Zn(2+) serves as cofactor.

The catalysed reaction is a UDP-3-O-[(3R)-3-hydroxyacyl]-N-acetyl-alpha-D-glucosamine + H2O = a UDP-3-O-[(3R)-3-hydroxyacyl]-alpha-D-glucosamine + acetate. It participates in glycolipid biosynthesis; lipid IV(A) biosynthesis; lipid IV(A) from (3R)-3-hydroxytetradecanoyl-[acyl-carrier-protein] and UDP-N-acetyl-alpha-D-glucosamine: step 2/6. Catalyzes the hydrolysis of UDP-3-O-myristoyl-N-acetylglucosamine to form UDP-3-O-myristoylglucosamine and acetate, the committed step in lipid A biosynthesis. This Hydrogenovibrio crunogenus (strain DSM 25203 / XCL-2) (Thiomicrospira crunogena) protein is UDP-3-O-acyl-N-acetylglucosamine deacetylase.